The chain runs to 477 residues: Glutamyl-tRNA(Gln) amidotransferase subunit A (477 aa).

Catalysis depends on charge relay system residues Lys68 and Ser143. Ser167 serves as the catalytic Acyl-ester intermediate.

Belongs to the amidase family. GatA subfamily. As to quaternary structure, heterotrimer of A, B and C subunits.

The catalysed reaction is L-glutamyl-tRNA(Gln) + L-glutamine + ATP + H2O = L-glutaminyl-tRNA(Gln) + L-glutamate + ADP + phosphate + H(+). Its function is as follows. Allows the formation of correctly charged Gln-tRNA(Gln) through the transamidation of misacylated Glu-tRNA(Gln) in organisms which lack glutaminyl-tRNA synthetase. The reaction takes place in the presence of glutamine and ATP through an activated gamma-phospho-Glu-tRNA(Gln). This is Glutamyl-tRNA(Gln) amidotransferase subunit A (gatA) from Mycoplasma genitalium (strain ATCC 33530 / DSM 19775 / NCTC 10195 / G37) (Mycoplasmoides genitalium).